We begin with the raw amino-acid sequence, 365 residues long: Anhydro-N-acetylmuramic acid kinase (365 aa).

ATP is bound at residue 12–19 (GTSMDGMD).

It belongs to the anhydro-N-acetylmuramic acid kinase family.

The enzyme catalyses 1,6-anhydro-N-acetyl-beta-muramate + ATP + H2O = N-acetyl-D-muramate 6-phosphate + ADP + H(+). Its pathway is amino-sugar metabolism; 1,6-anhydro-N-acetylmuramate degradation. The protein operates within cell wall biogenesis; peptidoglycan recycling. Its function is as follows. Catalyzes the specific phosphorylation of 1,6-anhydro-N-acetylmuramic acid (anhMurNAc) with the simultaneous cleavage of the 1,6-anhydro ring, generating MurNAc-6-P. Is required for the utilization of anhMurNAc either imported from the medium or derived from its own cell wall murein, and thus plays a role in cell wall recycling. The chain is Anhydro-N-acetylmuramic acid kinase from Pseudomonas paraeruginosa (strain DSM 24068 / PA7) (Pseudomonas aeruginosa (strain PA7)).